The primary structure comprises 192 residues: Sporulation initiation phosphotransferase B (192 aa).

Residue H30 is modified to Phosphohistidine.

Homodimer. Dimerization is essential for activity as both monomers contribute to the formation of the active site. Phosphorylated by spo0F.

Its subcellular location is the cytoplasm. Its function is as follows. Key element in the phosphorelay regulating sporulation initiation. Acts on spo0A. Mediates reversible phosphoryl transfer from spo0F to spo0A. In Bacillus subtilis (strain 168), this protein is Sporulation initiation phosphotransferase B (spo0B).